We begin with the raw amino-acid sequence, 259 residues long: Adenosylcobinamide-GDP ribazoletransferase (259 aa).

6 consecutive transmembrane segments (helical) span residues 9 to 29 (NLFF…WIEV), 43 to 63 (LVGL…LYWV), 64 to 84 (SPSI…GGFH), 118 to 138 (ALAL…LALF), 143 to 163 (VSLA…SFIF), and 190 to 210 (ILLA…ALVL).

It belongs to the CobS family. The cofactor is Mg(2+).

It localises to the cell inner membrane. It carries out the reaction alpha-ribazole + adenosylcob(III)inamide-GDP = adenosylcob(III)alamin + GMP + H(+). It catalyses the reaction alpha-ribazole 5'-phosphate + adenosylcob(III)inamide-GDP = adenosylcob(III)alamin 5'-phosphate + GMP + H(+). It functions in the pathway cofactor biosynthesis; adenosylcobalamin biosynthesis; adenosylcobalamin from cob(II)yrinate a,c-diamide: step 7/7. Its function is as follows. Joins adenosylcobinamide-GDP and alpha-ribazole to generate adenosylcobalamin (Ado-cobalamin). Also synthesizes adenosylcobalamin 5'-phosphate from adenosylcobinamide-GDP and alpha-ribazole 5'-phosphate. This chain is Adenosylcobinamide-GDP ribazoletransferase, found in Shewanella pealeana (strain ATCC 700345 / ANG-SQ1).